A 476-amino-acid polypeptide reads, in one-letter code: E3 SUMO-protein ligase EGR2 (476 aa).

Over residues 127–141 (PASTTASSSVTSASP) the composition is skewed to low complexity. The disordered stretch occupies residues 127 to 178 (PASTTASSSVTSASPNPLATGPLGVCTMSQTQPDLDHLYSPPPPPPPYSGCA). The short motif at 162–165 (DHLY) is the HCFC1-binding-motif (HBM) element. Position 247 is an N6-acetyllysine; by EP300 (Lys-247). Disordered regions lie at residues 275–300 (GPSA…SSSA) and 318–341 (RPIL…RPYP). The span at 281 to 290 (TGPGASGGSE) shows a compositional bias: gly residues. C2H2-type zinc fingers lie at residues 340-364 (YPCP…IRIH), 370-392 (FQCR…IRTH), and 398-420 (FACD…TKIH). The interval 412-476 (ERKRHTKIHL…APCSSRTRTP (65 aa)) is disordered. Residues 415–425 (RHTKIHLRQKE) show a composition bias toward basic residues. Positions 429–476 (SAPSASVPAPSTASCSGGVQPGGTLCSSNSSSLGGGPLAPCSSRTRTP) are enriched in low complexity.

Belongs to the EGR C2H2-type zinc-finger protein family. Interacts with HCFC1. Interacts with WWP2. Interacts with UBC9. Interacts with CITED1. Interacts (via phosphorylated form) with SFN. In terms of processing, ubiquitinated by WWP2 leading to proteasomal degradation. Post-translationally, acetylated at Lys-247. May be deacetylated by HDAC6, HDAC10 or SIRT1.

It is found in the nucleus. It functions in the pathway protein modification; protein sumoylation. In terms of biological role, sequence-specific DNA-binding transcription factor. Plays a role in hindbrain segmentation by regulating the expression of a subset of homeobox containing genes and in Schwann cell myelination by regulating the expression of genes involved in the formation and maintenance of myelin. Binds to two EGR2-consensus sites EGR2A (5'-CTGTAGGAG-3') and EGR2B (5'-ATGTAGGTG-3') in the HOXB3 enhancer and promotes HOXB3 transcriptional activation. Binds to specific DNA sites located in the promoter region of HOXA4, HOXB2 and ERBB2. Regulates hindbrain segmentation by controlling the expression of Hox genes, such as HOXA4, HOXB3 and HOXB2, and thereby specifying odd and even rhombomeres. Promotes the expression of HOXB3 in the rhombomere r5 in the hindbrain. Regulates myelination in the peripheral nervous system after birth, possibly by regulating the expression of myelin proteins, such as MPZ, and by promoting the differentiation of Schwann cells. Involved in the development of the jaw openener musculature, probably by playing a role in its innervation through trigeminal motor neurons. May play a role in adipogenesis, possibly by regulating the expression of CEBPB. E3 SUMO-protein ligase helping SUMO1 conjugation to its coregulators NAB1 and NAB2, whose sumoylation down-regulates EGR2 transcriptional activity. This Homo sapiens (Human) protein is E3 SUMO-protein ligase EGR2 (EGR2).